Reading from the N-terminus, the 203-residue chain is Tic20 family protein Ycf60 (203 aa).

5 consecutive transmembrane segments (helical) span residues 2–22 (IRLF…RLAL), 51–71 (TVPY…YVLP), 84–104 (IILP…VTFF), 131–151 (ILLF…PIEF), and 153–173 (ISFL…STIT).

This sequence belongs to the Tic20 family.

It is found in the plastid. Its subcellular location is the chloroplast membrane. This Pyropia yezoensis (Susabi-nori) protein is Tic20 family protein Ycf60 (ycf60).